A 114-amino-acid chain; its full sequence is PDZK1-interacting protein 1 (114 aa).

At 1–28 the chain is on the extracellular side; it reads MSALSLLILGLLTAVPPASCQQGLGNLQ. A helical transmembrane segment spans residues 29–51; sequence PWMQGLIAVAVFLVLVAIAFAVN. Over 52-114 the chain is Cytoplasmic; that stretch reads HFWCQEEPEP…EEGKVRSTPM (63 aa). Ser85 is subject to Phosphoserine. Residues 94–114 form a disordered region; sequence EHENAYENVPEEEGKVRSTPM. Positions 105–114 are enriched in basic and acidic residues; it reads EEGKVRSTPM.

The protein belongs to the PDZK1-interacting protein 1/SMIM24 family. In terms of assembly, forms a heterodimer (via N-terminal transmembrane helix) with SLC5A2/SGLT2 (via TM13); this interaction enhances SLC5A2 transporter activity. Interacts with PDZK1.

Its subcellular location is the apical cell membrane. Functionally, auxiliary protein of electrogenic Na(+)-coupled sugar symporter SLC5A2/SGLT2 and SLC5A1/SGLT1. Essential for the transporter activity of SLC5A2/SGLT2 but not SLC5A1/SGLT1. The chain is PDZK1-interacting protein 1 from Homo sapiens (Human).